The sequence spans 142 residues: MAKKIEAYIKLQVAAGAANPSPPVGPALGQKGVNIMEFCKAFNARTEKFEKGMPIPVVITVYNDRSFTFETKTPPASFLLLKAVGLKSGSGRPNTQKVGTIKRSAVQEIAETKAADMTGADIEAMTRSIEGTARSMGLVVED.

It belongs to the universal ribosomal protein uL11 family. Part of the ribosomal stalk of the 50S ribosomal subunit. Interacts with L10 and the large rRNA to form the base of the stalk. L10 forms an elongated spine to which L12 dimers bind in a sequential fashion forming a multimeric L10(L12)X complex. In terms of processing, one or more lysine residues are methylated.

Forms part of the ribosomal stalk which helps the ribosome interact with GTP-bound translation factors. This Shewanella frigidimarina (strain NCIMB 400) protein is Large ribosomal subunit protein uL11.